Reading from the N-terminus, the 368-residue chain is Probable leucine aminopeptidase TRV_05750 (368 aa).

Positions 1-18 are cleaved as a signal peptide; that stretch reads MKVFAIAAVAALTAVAVA. N92 is a glycosylation site (N-linked (GlcNAc...) asparagine). 2 residues coordinate Zn(2+): H172 and D191. 2 N-linked (GlcNAc...) asparagine glycosylation sites follow: N192 and N216. 2 residues coordinate Zn(2+): E230 and D257. The cysteines at positions 301 and 305 are disulfide-linked. Position 334 (H334) interacts with Zn(2+).

This sequence belongs to the peptidase M28 family. M28E subfamily. As to quaternary structure, monomer. Requires Zn(2+) as cofactor.

The protein localises to the secreted. Probable extracellular aminopeptidase which contributes to pathogenicity. This chain is Probable leucine aminopeptidase TRV_05750, found in Trichophyton verrucosum (strain HKI 0517).